Reading from the N-terminus, the 307-residue chain is Acetaldehyde dehydrogenase (307 aa).

12-15 (SGNI) provides a ligand contact to NAD(+). The active-site Acyl-thioester intermediate is cysteine 127. NAD(+) contacts are provided by residues 158–166 (SAGPGTRQN) and asparagine 278.

It belongs to the acetaldehyde dehydrogenase family. Monomer. Can also form a heterotetramer composed of two aldolase (TTHB246) and two dehydrogenase (TTHB247) subunits. Upon complex formation, the aldolase shows a 5-fold increase in substrate affinity, while the dehydrogenase shows a 3-fold decrease; the kcat values of each enzyme are reduced by 2-fold when they are in a complex.

It catalyses the reaction acetaldehyde + NAD(+) + CoA = acetyl-CoA + NADH + H(+). The catalysed reaction is propanal + NAD(+) + CoA = propanoyl-CoA + NADH + H(+). Catalyzes the conversion of acetaldehyde or propanal to acetyl-CoA or propanoyl-CoA, respectively, using NAD(+) and coenzyme A. The aldehyde substrates can be directly channeled from the aldolase TTHB246 to the dehydrogenase TTHB247. Is the final enzyme in the meta-cleavage pathway for the degradation of aromatic compounds. In Thermus thermophilus (strain ATCC 27634 / DSM 579 / HB8), this protein is Acetaldehyde dehydrogenase.